A 94-amino-acid chain; its full sequence is Integration host factor subunit beta (94 aa).

It belongs to the bacterial histone-like protein family. Heterodimer of an alpha and a beta chain.

This protein is one of the two subunits of integration host factor, a specific DNA-binding protein that functions in genetic recombination as well as in transcriptional and translational control. The sequence is that of Integration host factor subunit beta from Roseobacter denitrificans (strain ATCC 33942 / OCh 114) (Erythrobacter sp. (strain OCh 114)).